Reading from the N-terminus, the 434-residue chain is ATP-dependent protease ATPase subunit HslU (434 aa).

ATP-binding positions include Val18, 60–65 (GVGKTE), Asp247, Glu312, and Arg384.

This sequence belongs to the ClpX chaperone family. HslU subfamily. A double ring-shaped homohexamer of HslV is capped on each side by a ring-shaped HslU homohexamer. The assembly of the HslU/HslV complex is dependent on binding of ATP.

The protein localises to the cytoplasm. In terms of biological role, ATPase subunit of a proteasome-like degradation complex; this subunit has chaperone activity. The binding of ATP and its subsequent hydrolysis by HslU are essential for unfolding of protein substrates subsequently hydrolyzed by HslV. HslU recognizes the N-terminal part of its protein substrates and unfolds these before they are guided to HslV for hydrolysis. This is ATP-dependent protease ATPase subunit HslU from Bradyrhizobium sp. (strain ORS 278).